The primary structure comprises 393 residues: PPE family protein PPE26 (393 aa).

This sequence belongs to the mycobacterial PPE family. Interacts with human TLR2.

In terms of biological role, probably plays a key role in regulating innate and adaptive immune responses through human Toll-like receptor 2 (TLR2). Interacts with TLR2, leading to the subsequent activation of the mitogen-activated protein kinase (MAPK) and nuclear factor kappa B (NF-kappa-B) signaling pathways. Stimulates macrophage activation by augmenting pro-inflammatory cytokine production (TNF-alpha, IL-6 and IL-12p40) and the expression of cell surface molecules (CD80, CD86, MHC class I and II). Also participates in adaptive immunity by directing Th1-polarised immune responses. The polypeptide is PPE family protein PPE26 (Mycobacterium tuberculosis (strain ATCC 25618 / H37Rv)).